The following is a 337-amino-acid chain: Ketol-acid reductoisomerase (NADP(+)) (337 aa).

One can recognise a KARI N-terminal Rossmann domain in the interval 1–180 (MQVYYDKDAD…GGTKGGVIET (180 aa)). NADP(+)-binding positions include 24-27 (YGSQ), arginine 47, and serine 51. Histidine 106 is an active-site residue. An NADP(+)-binding site is contributed by glycine 132. The region spanning 181–326 (TFREETETDL…ARLRAMMPWI (146 aa)) is the KARI C-terminal knotted domain. Residues aspartate 189, glutamate 193, glutamate 225, and glutamate 229 each contribute to the Mg(2+) site. Serine 250 provides a ligand contact to substrate.

It belongs to the ketol-acid reductoisomerase family. The cofactor is Mg(2+).

The enzyme catalyses (2R)-2,3-dihydroxy-3-methylbutanoate + NADP(+) = (2S)-2-acetolactate + NADPH + H(+). The catalysed reaction is (2R,3R)-2,3-dihydroxy-3-methylpentanoate + NADP(+) = (S)-2-ethyl-2-hydroxy-3-oxobutanoate + NADPH + H(+). It participates in amino-acid biosynthesis; L-isoleucine biosynthesis; L-isoleucine from 2-oxobutanoate: step 2/4. The protein operates within amino-acid biosynthesis; L-valine biosynthesis; L-valine from pyruvate: step 2/4. Its function is as follows. Involved in the biosynthesis of branched-chain amino acids (BCAA). Catalyzes an alkyl-migration followed by a ketol-acid reduction of (S)-2-acetolactate (S2AL) to yield (R)-2,3-dihydroxy-isovalerate. In the isomerase reaction, S2AL is rearranged via a Mg-dependent methyl migration to produce 3-hydroxy-3-methyl-2-ketobutyrate (HMKB). In the reductase reaction, this 2-ketoacid undergoes a metal-dependent reduction by NADPH to yield (R)-2,3-dihydroxy-isovalerate. In Neisseria gonorrhoeae (strain ATCC 700825 / FA 1090), this protein is Ketol-acid reductoisomerase (NADP(+)).